A 282-amino-acid chain; its full sequence is UPF0294 protein VIBHAR_03217 (282 aa).

Belongs to the UPF0294 family.

The protein localises to the cytoplasm. This is UPF0294 protein VIBHAR_03217 from Vibrio campbellii (strain ATCC BAA-1116).